The primary structure comprises 1414 residues: MKALLDLFKQVQQEEQFDAIKIGLASPEKIRSWSYGEVKKPETINYRTFKPERDGLFCAKIFGPIKDYECLCGKYKRLKHRGVICEKCGVEVTLAKVRRERMGHIELAAPTAHIWFLKSLPSRLGMVLDMTLRDIERVLYFEAFVVIEPGMTPLKKSQIMSEDDYLAKCDEYGEGEFVAMMGAEGIRELLRGIDIEKQIEQIRAELQATGSEAKIKKFAKRLKVLEAFQRSGIKPEWMILEVLPVLPPELRPLVPLDGGRFATSDLNDLYRRVINRNNRLKRLLELKAPEIIVRNEKRMLQEAVDSLLDNGRRGKAMTGANKRPLKSLAEMIKGKGGRFRQNLLGKRVDYSGRSVIVVGPTLKLHQCGLPKLMALELFKPFIFHKLETMGIATTIKAAKKEVESQTPVVWDILEEVIREHPVMLNRAPTLHRLGIQAFEPVLIEGKAIQLHPLVCAAFNADFDGDQMAVHVPLSLEAQMEARTLMLASNNVLFPANGDPSIVPSQDVVLGLYYTTRDKINGKGEGMTFADISEVIRAYENKEVELASRVNVRITEYELVDKDAEGDARFAPKVTLQATTVGRAILSEILPKGLPFSVLNKPLKKKEISRLINTAFRRCGLRETVIFADKLLQSGFRLATRAGISIAIDDMLVPPAKEKIIAEASAKVKEYDKQYMSGLVTDQERYNNVVDIWGAAGDQVGKAMMEQLQHEDVVDREGKTVKQESFNSIYMMADSGARGSAAQIRQLAGMRGLMAKPDGSIIETPITANFREGLNVLQYFISTHGARKGLADTALKTANSGYLTRRLVDVTQDLVVVEDDCGTSNGVAMKALVEGGEVIEALRDRILGRVTVADVVNPETQETAIEAGTLLDEDLVELIDNIGVDEVKVRTPLSCDTRYGLCAKCYGRDLGRGVLVNSGEAVGVIAAQSIGEPGTQLTMRTFHIGGAASRAAVASSVEAKATGTVRFTATMRYVTNAKGELIVISRSGEALITDDHGRERERHKIPYGATLLVQDGQAIKAGTQLATWDALTRPIVSEYSGTIKFENVEEGVTVAKQMDEVTGLSTLVVIDAKRRTAATKGIRPQVKLLDANGQEVKIPGTDHSVTIGFQVGALITVKDGQQVHVGEVLARIPTESQKTRDITGGLPRVAELFEARSPKDAAVLAEVTGTTSFGKDTKGKQRLVITDLDGNAHEFLIAKEKQVLVHDGQVVNKGEMIVEGPADPHDILRLKGIEELAHYIVDEVQDVYRLQGVKINDKHIEVIVRQMLRRVQIVDVGDTKFIPGEQVERSELLDENDRVIAEGKRPATYENLLLGITKASLSTDSFISAASFQETTRVLTEAAIMGKTDDLRGLKENVIVGRLIPAGTGLAYHRARKAREASERERAQAIAEEEQSLFIEPPVVQATTEGEGDNV.

Residues C70, C72, C85, and C88 each contribute to the Zn(2+) site. 3 residues coordinate Mg(2+): D461, D463, and D465. Zn(2+) is bound by residues C820, C894, C901, and C904.

Belongs to the RNA polymerase beta' chain family. The RNAP catalytic core consists of 2 alpha, 1 beta, 1 beta' and 1 omega subunit. When a sigma factor is associated with the core the holoenzyme is formed, which can initiate transcription. Requires Mg(2+) as cofactor. Zn(2+) is required as a cofactor.

It catalyses the reaction RNA(n) + a ribonucleoside 5'-triphosphate = RNA(n+1) + diphosphate. In terms of biological role, DNA-dependent RNA polymerase catalyzes the transcription of DNA into RNA using the four ribonucleoside triphosphates as substrates. This chain is DNA-directed RNA polymerase subunit beta', found in Cupriavidus taiwanensis (strain DSM 17343 / BCRC 17206 / CCUG 44338 / CIP 107171 / LMG 19424 / R1) (Ralstonia taiwanensis (strain LMG 19424)).